The primary structure comprises 230 residues: 7-cyano-7-deazaguanine synthase (230 aa).

Residue 14-24 (LSGGLDSTTTL) coordinates ATP. Positions 194, 204, 207, and 210 each coordinate Zn(2+).

It belongs to the QueC family. Zn(2+) serves as cofactor.

The catalysed reaction is 7-carboxy-7-deazaguanine + NH4(+) + ATP = 7-cyano-7-deazaguanine + ADP + phosphate + H2O + H(+). Its pathway is purine metabolism; 7-cyano-7-deazaguanine biosynthesis. Functionally, catalyzes the ATP-dependent conversion of 7-carboxy-7-deazaguanine (CDG) to 7-cyano-7-deazaguanine (preQ(0)). This is 7-cyano-7-deazaguanine synthase from Ruthia magnifica subsp. Calyptogena magnifica.